The following is a 397-amino-acid chain: Riboflavin biosynthesis protein RibBA (397 aa).

The tract at residues 1-199 (MFHRIEEALE…IEDLIAYRRH (199 aa)) is DHBP synthase. D-ribulose 5-phosphate contacts are provided by residues 26–27 (RE), Asp-31, 138–142 (RAGHT), and Glu-162. Glu-27 is a Mg(2+) binding site. His-141 contributes to the Mg(2+) binding site. A GTP cyclohydrolase II region spans residues 200-397 (HETFVTKEVE…VTKLGHLLNL (198 aa)). GTP is bound at residue 250–254 (RVHSE). Residues Cys-255, Cys-266, and Cys-268 each contribute to the Zn(2+) site. GTP-binding positions include Gln-271, 293 to 295 (EGR), and Thr-315. Asp-327 acts as the Proton acceptor; for GTP cyclohydrolase activity in catalysis. Arg-329 functions as the Nucleophile; for GTP cyclohydrolase activity in the catalytic mechanism. Residues Thr-350 and Lys-355 each contribute to the GTP site.

It in the N-terminal section; belongs to the DHBP synthase family. The protein in the C-terminal section; belongs to the GTP cyclohydrolase II family. Requires Mg(2+) as cofactor. Mn(2+) serves as cofactor. The cofactor is Zn(2+).

It carries out the reaction D-ribulose 5-phosphate = (2S)-2-hydroxy-3-oxobutyl phosphate + formate + H(+). It catalyses the reaction GTP + 4 H2O = 2,5-diamino-6-hydroxy-4-(5-phosphoribosylamino)-pyrimidine + formate + 2 phosphate + 3 H(+). Its pathway is cofactor biosynthesis; riboflavin biosynthesis; 2-hydroxy-3-oxobutyl phosphate from D-ribulose 5-phosphate: step 1/1. The protein operates within cofactor biosynthesis; riboflavin biosynthesis; 5-amino-6-(D-ribitylamino)uracil from GTP: step 1/4. Catalyzes the conversion of D-ribulose 5-phosphate to formate and 3,4-dihydroxy-2-butanone 4-phosphate. Its function is as follows. Catalyzes the conversion of GTP to 2,5-diamino-6-ribosylamino-4(3H)-pyrimidinone 5'-phosphate (DARP), formate and pyrophosphate. The sequence is that of Riboflavin biosynthesis protein RibBA from Bacillus cytotoxicus (strain DSM 22905 / CIP 110041 / 391-98 / NVH 391-98).